A 223-amino-acid chain; its full sequence is Translation initiation factor 6 (223 aa).

The protein belongs to the eIF-6 family.

In terms of biological role, binds to the 50S ribosomal subunit and prevents its association with the 30S ribosomal subunit to form the 70S initiation complex. This chain is Translation initiation factor 6, found in Saccharolobus islandicus (strain M.16.27) (Sulfolobus islandicus).